The primary structure comprises 223 residues: tRNA (guanine-N(7)-)-methyltransferase (223 aa).

S-adenosyl-L-methionine is bound by residues E45, E70, and D125. Residue D125 is part of the active site. Substrate contacts are provided by residues K129, D161, and 201 to 204 (TEYE).

This sequence belongs to the class I-like SAM-binding methyltransferase superfamily. TrmB family.

The enzyme catalyses guanosine(46) in tRNA + S-adenosyl-L-methionine = N(7)-methylguanosine(46) in tRNA + S-adenosyl-L-homocysteine. It participates in tRNA modification; N(7)-methylguanine-tRNA biosynthesis. Catalyzes the formation of N(7)-methylguanine at position 46 (m7G46) in tRNA. In Mesoplasma florum (strain ATCC 33453 / NBRC 100688 / NCTC 11704 / L1) (Acholeplasma florum), this protein is tRNA (guanine-N(7)-)-methyltransferase.